The chain runs to 1296 residues: Aggregation substance (1296 aa).

The N-terminal stretch at 1–43 (MKQQTEVKKRFKMYKAKKHWVVAPILFIGVLGVVGLATDDVQA) is a signal peptide. Disordered stretches follow at residues 48–188 (TQPG…KPAE) and 1221–1245 (HTPE…TPQA). Positions 89–99 (KVEEVASEKNG) are enriched in basic and acidic residues. Composition is skewed to polar residues over residues 100–117 (AEQS…QQPT) and 125–138 (QEQP…TNEP). A compositionally biased stretch (basic and acidic residues) spans 160–178 (KEFETPDVDKAVDEAKKDP). An LPXTG sorting signal motif is present at residues 1261 to 1265 (LPQTG). Thr-1264 is subject to Pentaglycyl murein peptidoglycan amidated threonine. Residues 1265 to 1296 (GEKQNVLLTVAGSLAAMLGLAGLGFKRRKETK) constitute a propeptide, removed by sortase.

It belongs to the antigen I/II family.

It is found in the secreted. The protein localises to the cell wall. Its function is as follows. Aggregation substance allows donor and recipient strains to form tight aggregates which allow the non-motile bacteria to maintain physical contact over a period of time sufficient to permit conjugative transfer of the sex pheromone plasmid from donor to recipient strains. This Enterococcus faecalis (strain ATCC 700802 / V583) protein is Aggregation substance (asa1).